The following is a 325-amino-acid chain: DNA-directed RNA polymerase subunit alpha (325 aa).

An alpha N-terminal domain (alpha-NTD) region spans residues 1–231; sequence MQNSLLKPRI…DQLNVFAALE (231 aa). Positions 246 to 325 are alpha C-terminal domain (alpha-CTD); the sequence is VDPILLRPVD…ENWPPAGLEK (80 aa).

The protein belongs to the RNA polymerase alpha chain family. As to quaternary structure, homodimer. The RNAP catalytic core consists of 2 alpha, 1 beta, 1 beta' and 1 omega subunit. When a sigma factor is associated with the core the holoenzyme is formed, which can initiate transcription.

It catalyses the reaction RNA(n) + a ribonucleoside 5'-triphosphate = RNA(n+1) + diphosphate. DNA-dependent RNA polymerase catalyzes the transcription of DNA into RNA using the four ribonucleoside triphosphates as substrates. The sequence is that of DNA-directed RNA polymerase subunit alpha from Janthinobacterium sp. (strain Marseille) (Minibacterium massiliensis).